We begin with the raw amino-acid sequence, 256 residues long: Adenosine 5'-phosphosulfate reductase (256 aa).

Residues C120, C121, C203, and C206 each contribute to the [4Fe-4S] cluster site. C231 serves as the catalytic Nucleophile; cysteine thiosulfonate intermediate.

This sequence belongs to the PAPS reductase family. CysH subfamily. The cofactor is [4Fe-4S] cluster.

Its subcellular location is the cytoplasm. The enzyme catalyses [thioredoxin]-disulfide + sulfite + AMP + 2 H(+) = adenosine 5'-phosphosulfate + [thioredoxin]-dithiol. It participates in sulfur metabolism; hydrogen sulfide biosynthesis; sulfite from sulfate. Its function is as follows. Catalyzes the formation of sulfite from adenosine 5'-phosphosulfate (APS) using thioredoxin as an electron donor. The protein is Adenosine 5'-phosphosulfate reductase of Allochromatium vinosum (strain ATCC 17899 / DSM 180 / NBRC 103801 / NCIMB 10441 / D) (Chromatium vinosum).